Reading from the N-terminus, the 472-residue chain is Probable dipeptidase A (472 aa).

The active site involves C10.

The protein belongs to the peptidase C69 family.

It carries out the reaction an L-aminoacyl-L-amino acid + H2O = 2 an L-alpha-amino acid. This Streptococcus pyogenes serotype M18 (strain MGAS8232) protein is Probable dipeptidase A (pepDA).